Here is a 690-residue protein sequence, read N- to C-terminus: Cysteine-rich receptor-like protein kinase 21 (690 aa).

The N-terminal stretch at 1-24 (MQKNKMVDLRAIFWFVVISSCAVA) is a signal peptide. Residues 25-129 (APTCIQRSDF…CLVRYSNHLI (105 aa)) enclose the Gnk2-homologous 1 domain. Residues 25-281 (APTCIQRSDF…KDGKNISTGS (257 aa)) lie on the Extracellular side of the membrane. 6 N-linked (GlcNAc...) asparagine glycosylation sites follow: asparagine 130, asparagine 148, asparagine 155, asparagine 220, asparagine 268, and asparagine 276. A Gnk2-homologous 2 domain is found at 140-246 (AEYIEYKYNT…CFMRWDLQPF (107 aa)). Residues 282 to 302 (IVAIAVVSVVVSTVLLALGYA) form a helical membrane-spanning segment. Topologically, residues 303–690 (VSRRRKAYQS…DASITSVRPR (388 aa)) are cytoplasmic. The region spanning 363–640 (FHKSNKLGHG…IFRMLTNVSI (278 aa)) is the Protein kinase domain. ATP is bound by residues 369 to 377 (LGHGGFGAV) and lysine 391. Tyrosine 436 bears the Phosphotyrosine mark. Aspartate 488 serves as the catalytic Proton acceptor. Serine 492 is subject to Phosphoserine. Threonine 528 carries the phosphothreonine modification. Tyrosine 536 carries the phosphotyrosine modification.

Belongs to the protein kinase superfamily. Ser/Thr protein kinase family. CRK subfamily.

The protein resides in the membrane. It carries out the reaction L-seryl-[protein] + ATP = O-phospho-L-seryl-[protein] + ADP + H(+). The enzyme catalyses L-threonyl-[protein] + ATP = O-phospho-L-threonyl-[protein] + ADP + H(+). The sequence is that of Cysteine-rich receptor-like protein kinase 21 (CRK21) from Arabidopsis thaliana (Mouse-ear cress).